Reading from the N-terminus, the 520-residue chain is Bifunctional purine biosynthesis protein PurH (520 aa).

Residues 1-146 (MAPVALLSVS…KNHADVAVLT (146 aa)) form the MGS-like domain.

This sequence belongs to the PurH family.

The enzyme catalyses (6R)-10-formyltetrahydrofolate + 5-amino-1-(5-phospho-beta-D-ribosyl)imidazole-4-carboxamide = 5-formamido-1-(5-phospho-D-ribosyl)imidazole-4-carboxamide + (6S)-5,6,7,8-tetrahydrofolate. It carries out the reaction IMP + H2O = 5-formamido-1-(5-phospho-D-ribosyl)imidazole-4-carboxamide. It functions in the pathway purine metabolism; IMP biosynthesis via de novo pathway; 5-formamido-1-(5-phospho-D-ribosyl)imidazole-4-carboxamide from 5-amino-1-(5-phospho-D-ribosyl)imidazole-4-carboxamide (10-formyl THF route): step 1/1. The protein operates within purine metabolism; IMP biosynthesis via de novo pathway; IMP from 5-formamido-1-(5-phospho-D-ribosyl)imidazole-4-carboxamide: step 1/1. This chain is Bifunctional purine biosynthesis protein PurH, found in Synechococcus sp. (strain CC9605).